The chain runs to 773 residues: Cellobiose dehydrogenase (773 aa).

The signal sequence occupies residues 1–18 (MLGRSLLALLPFVGLAFS). Pyrrolidone carboxylic acid is present on glutamine 19. The tract at residues 19–208 (QSASQFTDPT…YQNYLNGDSG (190 aa)) is heme domain. Residues methionine 83 and histidine 181 each contribute to the heme site. The disordered stretch occupies residues 203 to 227 (LNGDSGNPTTTSTKPTSTSSSVTTG). A compositionally biased stretch (low complexity) spans 210–227 (PTTTSTKPTSTSSSVTTG). The interval 235 to 773 (YDYIIVGAGP…AKILALAGGP (539 aa)) is oxidoreductase. Residue 236-265 (DYIIVGAGPGGIIAADRLSEAGKKVLLLER) participates in FAD binding. Catalysis depends on histidine 707, which acts as the Proton acceptor.

This sequence in the C-terminal section; belongs to the GMC oxidoreductase family. Requires FAD as cofactor. Heme is required as a cofactor.

It localises to the secreted. The enzyme catalyses D-cellobiose + A = D-cellobiono-1,5-lactone + AH2. Its function is as follows. Degrades both lignin and cellulose. Oxidizes cellobiose to cellobionolactone. The sequence is that of Cellobiose dehydrogenase (CDH-1) from Phanerodontia chrysosporium (White-rot fungus).